A 612-amino-acid polypeptide reads, in one-letter code: Probable cytosolic Fe-S cluster assembly factor SJAG_02895 (612 aa).

13–20 contacts ATP; sequence GKGGVGKS. Residues C200 and C203 each contribute to the [4Fe-4S] cluster site. WD repeat units lie at residues 287–326, 330–370, 375–414, 420–459, 464–503, 528–566, and 574–612; these read GHRG…LIHV, YHTR…WECV, GHEN…EFDC, EHTQ…WVQT, SHTS…EDAA, TFTE…STWH, and AHDV…DQTA.

It in the N-terminal section; belongs to the Mrp/NBP35 ATP-binding proteins family. NUBP2/CFD1 subfamily. This sequence in the C-terminal section; belongs to the WD repeat CIA1 family. Heterotetramer of 2 nbp35 and 2 SJAG_02895 chains. Requires [4Fe-4S] cluster as cofactor.

The protein localises to the cytoplasm. It is found in the nucleus. Fusion protein of two essential components of the cytosolic iron-sulfur (Fe/S) protein assembly (CIA) machinery. Required for maturation of extramitochondrial Fe-S proteins. May form a heterotetramer with nubp35, functioning as a Fe-S scaffold complex, mediating the de novo assembly of an Fe-S cluster and its transfer to target apoproteins. The polypeptide is Probable cytosolic Fe-S cluster assembly factor SJAG_02895 (Schizosaccharomyces japonicus (strain yFS275 / FY16936) (Fission yeast)).